Consider the following 89-residue polypeptide: Small ribosomal subunit protein uS15 (89 aa).

It belongs to the universal ribosomal protein uS15 family. As to quaternary structure, part of the 30S ribosomal subunit. Forms a bridge to the 50S subunit in the 70S ribosome, contacting the 23S rRNA.

One of the primary rRNA binding proteins, it binds directly to 16S rRNA where it helps nucleate assembly of the platform of the 30S subunit by binding and bridging several RNA helices of the 16S rRNA. Its function is as follows. Forms an intersubunit bridge (bridge B4) with the 23S rRNA of the 50S subunit in the ribosome. In Shewanella loihica (strain ATCC BAA-1088 / PV-4), this protein is Small ribosomal subunit protein uS15.